The sequence spans 325 residues: MAFIGIDHGTTAMRFALIEGESTHTFELERAEAAAMSENEILTSLEEHFGIRRETINLIALTYSMGDGFSTIKDVRNLEGRGLKSIEGAGKKTGGGTRVFDAIRHSGVPAIAIPGLHTESKVDPRMKVFSHLTSPEKLGIAYHILCLGYNNFVVSDISSNTVTLAIADRKVIGAIDACIFAPGVHHGPLDLQAIRDVDNGYRTANKAFMEAGALKMTPYKDRDELLLAAEDEESPALLALDTISLFAAMEIASMQLLLKDYETIGEVFLAGSVGEFEYVQKKIRAHLGQECQCLGKWHAAIGCAEIARDVFAGEKEILGVEVNYP.

Belongs to the UPF0285 family.

The chain is UPF0285 protein Mbar_A0208 from Methanosarcina barkeri (strain Fusaro / DSM 804).